A 337-amino-acid polypeptide reads, in one-letter code: Holliday junction branch migration complex subunit RuvB (337 aa).

The tract at residues 1–27 is disordered; that stretch reads MIEADRLVHAQPQGTEERDEQIDRAMR. The interval 4 to 187 is large ATPase domain (RuvB-L); it reads ADRLVHAQPQ…FGIPLRLEFY (184 aa). ATP is bound by residues Arg-27, Gly-68, Lys-71, Thr-72, Thr-73, 134–136, Arg-177, Tyr-187, and Arg-224; that span reads EDY. Residue Thr-72 coordinates Mg(2+). A small ATPAse domain (RuvB-S) region spans residues 188–258; the sequence is NVKDLSSIVT…VAESALDMLD (71 aa). The interval 261–337 is head domain (RuvB-H); sequence VEGFDYMDRK…YQHFNLIQPE (77 aa). DNA-binding residues include Arg-297, Arg-316, and Arg-321.

Belongs to the RuvB family. Homohexamer. Forms an RuvA(8)-RuvB(12)-Holliday junction (HJ) complex. HJ DNA is sandwiched between 2 RuvA tetramers; dsDNA enters through RuvA and exits via RuvB. An RuvB hexamer assembles on each DNA strand where it exits the tetramer. Each RuvB hexamer is contacted by two RuvA subunits (via domain III) on 2 adjacent RuvB subunits; this complex drives branch migration. In the full resolvosome a probable DNA-RuvA(4)-RuvB(12)-RuvC(2) complex forms which resolves the HJ.

The protein localises to the cytoplasm. It catalyses the reaction ATP + H2O = ADP + phosphate + H(+). The RuvA-RuvB-RuvC complex processes Holliday junction (HJ) DNA during genetic recombination and DNA repair, while the RuvA-RuvB complex plays an important role in the rescue of blocked DNA replication forks via replication fork reversal (RFR). RuvA specifically binds to HJ cruciform DNA, conferring on it an open structure. The RuvB hexamer acts as an ATP-dependent pump, pulling dsDNA into and through the RuvAB complex. RuvB forms 2 homohexamers on either side of HJ DNA bound by 1 or 2 RuvA tetramers; 4 subunits per hexamer contact DNA at a time. Coordinated motions by a converter formed by DNA-disengaged RuvB subunits stimulates ATP hydrolysis and nucleotide exchange. Immobilization of the converter enables RuvB to convert the ATP-contained energy into a lever motion, pulling 2 nucleotides of DNA out of the RuvA tetramer per ATP hydrolyzed, thus driving DNA branch migration. The RuvB motors rotate together with the DNA substrate, which together with the progressing nucleotide cycle form the mechanistic basis for DNA recombination by continuous HJ branch migration. Branch migration allows RuvC to scan DNA until it finds its consensus sequence, where it cleaves and resolves cruciform DNA. This is Holliday junction branch migration complex subunit RuvB from Shewanella loihica (strain ATCC BAA-1088 / PV-4).